We begin with the raw amino-acid sequence, 4743 residues long: Apolipoprotein B-100 (4743 aa).

The signal sequence occupies residues 1–27 (MGPQRPALRAPLLLLFLLLFLDTSVWA). The segment at 29–113 (DATRFKHLRK…KNSEEFASAM (85 aa)) is heparin-binding. The region spanning 33–660 (FKHLRKYVYS…PSSYLPKESM (628 aa)) is the Vitellogenin domain. A disulfide bond links C65 and C84. N-linked (GlcNAc...) asparagine glycosylation is present at N172. Intrachain disulfides connect C173/C199, C232/C248, C372/C377, and C466/C501. The segment at 219–293 (VRPLSTLISS…RFFRGGINQV (75 aa)) is heparin-binding. Residues 890–947 (NTNFFHESGLEARVALKAGQLKVIIPSPKRPVKLFSGSNTLHLVSTTKTEVIPPLIEN) are heparin-binding. C954 and C964 are disulfide-bonded. Residues N971, N1336, N1345, and N1491 are each glycosylated (N-linked (GlcNAc...) asparagine). K1973 carries the N6-acetyllysine modification. Residue S2006 is modified to Phosphoserine. A heparin-binding region spans residues 2010-2145 (NDAFDEPREF…EKLSQLETYA (136 aa)). N2094, N2522, N2662, N2741, N2791, N2897, N2944, and N3063 each carry an N-linked (GlcNAc...) asparagine glycan. A heparin-binding region spans residues 3123–3198 (FLKTTKQSFD…KIKFDKYKTE (76 aa)). A basic (possible receptor binding region) region spans residues 3136-3146 (KAQYKKNRDKH). N-linked (GlcNAc...) asparagine glycosylation is found at N3186, N3299, and N3321. Residues 3336–3356 (VTDALQYKLEGTSRLMRKKVL) form an LDL receptor binding region. Positions 3346–3479 (GTSRLMRKKV…QEYSGSVANE (134 aa)) are heparin-binding. The interval 3349–3357 (RLMRKKVLK) is basic (possible receptor binding region). 3 N-linked (GlcNAc...) asparagine glycosylation sites follow: N3428, N3715, and N3828. Position 3981 is a phosphoserine (S3981). T3985 is subject to Phosphothreonine. N4203 and N4232 each carry an N-linked (GlcNAc...) asparagine glycan.

In terms of assembly, interacts with PCSK9. Interacts with MTTP. Interacts with AUP1. Interacts with CIDEB. Palmitoylated; structural requirement for proper assembly of the hydrophobic core of the lipoprotein particle. In terms of tissue distribution, detected in intestine and liver (at protein level).

The protein localises to the cytoplasm. The protein resides in the secreted. It localises to the lipid droplet. Apolipoprotein B is a major protein constituent of chylomicrons (apo B-48), LDL (apo B-100) and VLDL (apo B-100). Apo B-100 functions as a recognition signal for the cellular binding and internalization of LDL particles by the apoB/E receptor. This is Apolipoprotein B-100 (Apob) from Rattus norvegicus (Rat).